A 216-amino-acid polypeptide reads, in one-letter code: 2',3'-cyclic-nucleotide 3'-phosphodiesterase (216 aa).

H39 (proton donor/acceptor) is an active-site residue. Residue T41 participates in substrate binding. H137 (proton donor/acceptor) is an active-site residue. Residues S139 and Y142 each contribute to the substrate site.

Belongs to the 2H phosphoesterase superfamily. CPD1 family.

The protein resides in the golgi apparatus. The enzyme catalyses a nucleoside 2',3'-cyclic phosphate + H2O = a nucleoside 2'-phosphate + H(+). Functionally, involved in the metabolism of ADP-ribose 1',2'-cyclic phosphate which is produced as a consequence of tRNA splicing. This Eremothecium gossypii (strain ATCC 10895 / CBS 109.51 / FGSC 9923 / NRRL Y-1056) (Yeast) protein is 2',3'-cyclic-nucleotide 3'-phosphodiesterase (CPD1).